The primary structure comprises 545 residues: CTP synthase (545 aa).

The tract at residues 1-266 is amidoligase domain; the sequence is MTTNYIFVTG…DDYICKRFSL (266 aa). Residue serine 14 participates in CTP binding. Serine 14 serves as a coordination point for UTP. Residues 15–20 and aspartate 72 contribute to the ATP site; that span reads SLGKGI. Mg(2+) contacts are provided by aspartate 72 and glutamate 140. Residues 147 to 149, 187 to 192, and lysine 223 each bind CTP; these read DIE and KTKPTQ. UTP-binding positions include 187 to 192 and lysine 223; that span reads KTKPTQ. 239–241 lines the ATP pocket; it reads KDV. A Glutamine amidotransferase type-1 domain is found at 291 to 542; it reads TIGMIGKYVE…VKAAGDYQKR (252 aa). Glycine 352 provides a ligand contact to L-glutamine. The active-site Nucleophile; for glutamine hydrolysis is cysteine 379. Residues 380–383, glutamate 403, and arginine 470 contribute to the L-glutamine site; that span reads LGMQ. Catalysis depends on residues histidine 515 and glutamate 517.

This sequence belongs to the CTP synthase family. Homotetramer.

The enzyme catalyses UTP + L-glutamine + ATP + H2O = CTP + L-glutamate + ADP + phosphate + 2 H(+). The catalysed reaction is L-glutamine + H2O = L-glutamate + NH4(+). It carries out the reaction UTP + NH4(+) + ATP = CTP + ADP + phosphate + 2 H(+). It participates in pyrimidine metabolism; CTP biosynthesis via de novo pathway; CTP from UDP: step 2/2. With respect to regulation, allosterically activated by GTP, when glutamine is the substrate; GTP has no effect on the reaction when ammonia is the substrate. The allosteric effector GTP functions by stabilizing the protein conformation that binds the tetrahedral intermediate(s) formed during glutamine hydrolysis. Inhibited by the product CTP, via allosteric rather than competitive inhibition. Catalyzes the ATP-dependent amination of UTP to CTP with either L-glutamine or ammonia as the source of nitrogen. Regulates intracellular CTP levels through interactions with the four ribonucleotide triphosphates. The protein is CTP synthase of Yersinia pseudotuberculosis serotype O:1b (strain IP 31758).